A 205-amino-acid chain; its full sequence is Probable GTP-binding protein EngB (205 aa).

Positions 27-201 constitute an EngB-type G domain; the sequence is TGIEIAFAGR…AAKLDFWFSP (175 aa). Residues 35 to 42, 62 to 66, 80 to 83, 147 to 150, and 180 to 182 each bind GTP; these read GRSNAGKS, GRTQL, DLPG, TKAD, and FSA. Positions 42 and 64 each coordinate Mg(2+).

It belongs to the TRAFAC class TrmE-Era-EngA-EngB-Septin-like GTPase superfamily. EngB GTPase family. Requires Mg(2+) as cofactor.

In terms of biological role, necessary for normal cell division and for the maintenance of normal septation. The chain is Probable GTP-binding protein EngB from Haemophilus influenzae (strain PittEE).